Consider the following 399-residue polypeptide: V-set and immunoglobulin domain-containing protein 4 (399 aa).

The first 19 residues, Met1 to Gly19, serve as a signal peptide directing secretion. Residues Arg20–Pro283 are Extracellular-facing. 2 consecutive Ig-like domains span residues Pro21–Thr131 and Pro143–Val226. 2 cysteine pairs are disulfide-bonded: Cys41–Cys113 and Cys165–Cys211. The chain crosses the membrane as a helical span at residues Val284–Ile304. Topologically, residues Met305–Cys399 are cytoplasmic.

As to expression, abundantly expressed in several fetal tissues. In adult tissues, highest expression in lung and placenta. Expressed in resting macrophages.

It is found in the membrane. In terms of biological role, phagocytic receptor, strong negative regulator of T-cell proliferation and IL2 production. Potent inhibitor of the alternative complement pathway convertases. This chain is V-set and immunoglobulin domain-containing protein 4 (VSIG4), found in Homo sapiens (Human).